A 150-amino-acid polypeptide reads, in one-letter code: Flagellar assembly factor FliW (150 aa).

It belongs to the FliW family. As to quaternary structure, interacts with translational regulator CsrA and flagellin(s).

It is found in the cytoplasm. Its function is as follows. Acts as an anti-CsrA protein, binds CsrA and prevents it from repressing translation of its target genes, one of which is flagellin. Binds to flagellin and participates in the assembly of the flagellum. The chain is Flagellar assembly factor FliW from Leptospira borgpetersenii serovar Hardjo-bovis (strain JB197).